Here is a 319-residue protein sequence, read N- to C-terminus: 1-aminocyclopropane-1-carboxylate oxidase (319 aa).

The 101-residue stretch at 153 to 253 folds into the Fe2OG dioxygenase domain; that stretch reads PTFGTKVSNY…RMSIASFYNP (101 aa). Fe cation contacts are provided by H177, D179, and H234.

It belongs to the iron/ascorbate-dependent oxidoreductase family. Fe cation serves as cofactor.

It catalyses the reaction 1-aminocyclopropane-1-carboxylate + L-ascorbate + O2 = ethene + L-dehydroascorbate + hydrogen cyanide + CO2 + 2 H2O. The protein operates within alkene biosynthesis; ethylene biosynthesis via S-adenosyl-L-methionine; ethylene from S-adenosyl-L-methionine: step 2/2. The chain is 1-aminocyclopropane-1-carboxylate oxidase (ACO) from Actinidia deliciosa (Kiwi).